We begin with the raw amino-acid sequence, 397 residues long: Tryptophan synthase beta chain (397 aa).

Lys-91 bears the N6-(pyridoxal phosphate)lysine mark.

This sequence belongs to the TrpB family. In terms of assembly, tetramer of two alpha and two beta chains. The cofactor is pyridoxal 5'-phosphate.

The enzyme catalyses (1S,2R)-1-C-(indol-3-yl)glycerol 3-phosphate + L-serine = D-glyceraldehyde 3-phosphate + L-tryptophan + H2O. It participates in amino-acid biosynthesis; L-tryptophan biosynthesis; L-tryptophan from chorismate: step 5/5. The beta subunit is responsible for the synthesis of L-tryptophan from indole and L-serine. The sequence is that of Tryptophan synthase beta chain from Bacillus cereus (strain Q1).